The following is an 85-amino-acid chain: Sec-independent protein translocase protein TatA (85 aa).

A helical membrane pass occupies residues 1–21 (MGGISIWQLLIIALIVVLLFG). The tract at residues 43-85 (MSSDEDKKALEDAEAAKSVQTAQTAQPTQQATEKKPESNKEQA) is disordered. A compositionally biased stretch (basic and acidic residues) spans 46 to 57 (DEDKKALEDAEA). Positions 58-73 (AKSVQTAQTAQPTQQA) are enriched in low complexity. Over residues 74-85 (TEKKPESNKEQA) the composition is skewed to basic and acidic residues.

It belongs to the TatA/E family. The Tat system comprises two distinct complexes: a TatABC complex, containing multiple copies of TatA, TatB and TatC subunits, and a separate TatA complex, containing only TatA subunits. Substrates initially bind to the TatABC complex, which probably triggers association of the separate TatA complex to form the active translocon.

It localises to the cell inner membrane. Its function is as follows. Part of the twin-arginine translocation (Tat) system that transports large folded proteins containing a characteristic twin-arginine motif in their signal peptide across membranes. TatA could form the protein-conducting channel of the Tat system. The chain is Sec-independent protein translocase protein TatA from Shewanella sp. (strain ANA-3).